The chain runs to 500 residues: tRNA (guanine(37)-N(1))-methyltransferase (500 aa).

S-adenosyl-L-methionine contacts are provided by residues histidine 215, 253-254, 281-282, and asparagine 312; these read DL and DA. Residues 463 to 500 are disordered; sequence QIVAKKTPKPAPRPLPAKNKTTPDTNKMETDLTKLEMK. Residues 488 to 500 show a composition bias toward basic and acidic residues; the sequence is NKMETDLTKLEMK.

Belongs to the class I-like SAM-binding methyltransferase superfamily. TRM5/TYW2 family. Monomer.

The protein resides in the mitochondrion matrix. It localises to the nucleus. The protein localises to the cytoplasm. It catalyses the reaction guanosine(37) in tRNA + S-adenosyl-L-methionine = N(1)-methylguanosine(37) in tRNA + S-adenosyl-L-homocysteine + H(+). In terms of biological role, specifically methylates the N1 position of guanosine-37 in various cytoplasmic and mitochondrial tRNAs. Methylation is not dependent on the nature of the nucleoside 5' of the target nucleoside. This is the first step in the biosynthesis of wybutosine (yW), a modified base adjacent to the anticodon of tRNAs and required for accurate decoding. The sequence is that of tRNA (guanine(37)-N(1))-methyltransferase from Anopheles darlingi (Mosquito).